A 224-amino-acid chain; its full sequence is 7-cyano-7-deazaguanine synthase (224 aa).

Position 10 to 20 (10 to 20) interacts with ATP; sequence FSGGQDSTTCL. Zn(2+) is bound by residues Cys193, Cys201, Cys204, and Cys207.

Belongs to the QueC family. Requires Zn(2+) as cofactor.

The enzyme catalyses 7-carboxy-7-deazaguanine + NH4(+) + ATP = 7-cyano-7-deazaguanine + ADP + phosphate + H2O + H(+). Its pathway is purine metabolism; 7-cyano-7-deazaguanine biosynthesis. Functionally, catalyzes the ATP-dependent conversion of 7-carboxy-7-deazaguanine (CDG) to 7-cyano-7-deazaguanine (preQ(0)). The polypeptide is 7-cyano-7-deazaguanine synthase (Neisseria gonorrhoeae (strain ATCC 700825 / FA 1090)).